Reading from the N-terminus, the 615-residue chain is Dihydroxy-acid dehydratase (615 aa).

Asp-81 contacts Mg(2+). Cys-122 provides a ligand contact to [2Fe-2S] cluster. The Mg(2+) site is built by Asp-123 and Lys-124. Lys-124 carries the N6-carboxylysine modification. Cys-195 is a [2Fe-2S] cluster binding site. Glu-491 provides a ligand contact to Mg(2+). The active-site Proton acceptor is Ser-517.

The protein belongs to the IlvD/Edd family. Homodimer. The cofactor is [2Fe-2S] cluster. Mg(2+) is required as a cofactor.

It catalyses the reaction (2R)-2,3-dihydroxy-3-methylbutanoate = 3-methyl-2-oxobutanoate + H2O. The catalysed reaction is (2R,3R)-2,3-dihydroxy-3-methylpentanoate = (S)-3-methyl-2-oxopentanoate + H2O. Its pathway is amino-acid biosynthesis; L-isoleucine biosynthesis; L-isoleucine from 2-oxobutanoate: step 3/4. The protein operates within amino-acid biosynthesis; L-valine biosynthesis; L-valine from pyruvate: step 3/4. Its function is as follows. Functions in the biosynthesis of branched-chain amino acids. Catalyzes the dehydration of (2R,3R)-2,3-dihydroxy-3-methylpentanoate (2,3-dihydroxy-3-methylvalerate) into 2-oxo-3-methylpentanoate (2-oxo-3-methylvalerate) and of (2R)-2,3-dihydroxy-3-methylbutanoate (2,3-dihydroxyisovalerate) into 2-oxo-3-methylbutanoate (2-oxoisovalerate), the penultimate precursor to L-isoleucine and L-valine, respectively. This chain is Dihydroxy-acid dehydratase, found in Novosphingobium aromaticivorans (strain ATCC 700278 / DSM 12444 / CCUG 56034 / CIP 105152 / NBRC 16084 / F199).